Reading from the N-terminus, the 90-residue chain is UPF0298 protein SSU05_1549 (90 aa).

This sequence belongs to the UPF0298 family.

The protein resides in the cytoplasm. This chain is UPF0298 protein SSU05_1549, found in Streptococcus suis (strain 05ZYH33).